Reading from the N-terminus, the 611-residue chain is Elongation factor 4 (611 aa).

One can recognise a tr-type G domain in the interval 11–193 (EKIRNFSIIA…QVVEYVPAPS (183 aa)). Residues 23–28 (DHGKST) and 140–143 (NKID) contribute to the GTP site.

This sequence belongs to the TRAFAC class translation factor GTPase superfamily. Classic translation factor GTPase family. LepA subfamily.

Its subcellular location is the cell membrane. The enzyme catalyses GTP + H2O = GDP + phosphate + H(+). In terms of biological role, required for accurate and efficient protein synthesis under certain stress conditions. May act as a fidelity factor of the translation reaction, by catalyzing a one-codon backward translocation of tRNAs on improperly translocated ribosomes. Back-translocation proceeds from a post-translocation (POST) complex to a pre-translocation (PRE) complex, thus giving elongation factor G a second chance to translocate the tRNAs correctly. Binds to ribosomes in a GTP-dependent manner. This Enterococcus faecalis (strain ATCC 700802 / V583) protein is Elongation factor 4.